The following is a 418-amino-acid chain: D-amino acid dehydrogenase (418 aa).

3 to 17 contacts FAD; that stretch reads VLVLGAGVAGVSSAW.

Belongs to the DadA oxidoreductase family. The cofactor is FAD.

The catalysed reaction is a D-alpha-amino acid + A + H2O = a 2-oxocarboxylate + AH2 + NH4(+). It participates in amino-acid degradation; D-alanine degradation; NH(3) and pyruvate from D-alanine: step 1/1. In terms of biological role, oxidative deamination of D-amino acids. This chain is D-amino acid dehydrogenase, found in Neisseria meningitidis serogroup C (strain 053442).